Consider the following 425-residue polypeptide: Enolase (425 aa).

Gln-162 contributes to the (2R)-2-phosphoglycerate binding site. The active-site Proton donor is the Glu-204. Residues Asp-241, Glu-282, and Asp-309 each coordinate Mg(2+). Residues Lys-334, Arg-363, Ser-364, and Lys-385 each contribute to the (2R)-2-phosphoglycerate site. The Proton acceptor role is filled by Lys-334.

Belongs to the enolase family. The cofactor is Mg(2+).

It localises to the cytoplasm. It is found in the secreted. The protein resides in the cell surface. The catalysed reaction is (2R)-2-phosphoglycerate = phosphoenolpyruvate + H2O. It participates in carbohydrate degradation; glycolysis; pyruvate from D-glyceraldehyde 3-phosphate: step 4/5. Catalyzes the reversible conversion of 2-phosphoglycerate (2-PG) into phosphoenolpyruvate (PEP). It is essential for the degradation of carbohydrates via glycolysis. The chain is Enolase from Corynebacterium efficiens (strain DSM 44549 / YS-314 / AJ 12310 / JCM 11189 / NBRC 100395).